The sequence spans 75 residues: MLDKVKEIIVEQLGVDADQIKPESNFVDDLGADSLDTVELIMSFEEEFGVEIPDTEAEKIKTVQDVINYIEANKK.

The Carrier domain maps to 1–74 (MLDKVKEIIV…DVINYIEANK (74 aa)). Ser-34 is modified (O-(pantetheine 4'-phosphoryl)serine).

This sequence belongs to the acyl carrier protein (ACP) family. 4'-phosphopantetheine is transferred from CoA to a specific serine of apo-ACP by AcpS. This modification is essential for activity because fatty acids are bound in thioester linkage to the sulfhydryl of the prosthetic group.

It localises to the cytoplasm. It participates in lipid metabolism; fatty acid biosynthesis. Its function is as follows. Carrier of the growing fatty acid chain in fatty acid biosynthesis. The chain is Acyl carrier protein from Fusobacterium nucleatum subsp. nucleatum (strain ATCC 25586 / DSM 15643 / BCRC 10681 / CIP 101130 / JCM 8532 / KCTC 2640 / LMG 13131 / VPI 4355).